The chain runs to 236 residues: Class B acid phosphatase (236 aa).

A signal peptide spans 1–23; sequence MRKLTLTLSALALALSLNSVADA. The active-site Nucleophile is Asp68. Mg(2+)-binding residues include Asp68 and Asp70. The Proton donor role is filled by Asp70. Residues 136-137 and Lys176 each bind substrate; that span reads TG. Asp191 contributes to the Mg(2+) binding site.

The protein belongs to the class B bacterial acid phosphatase family. Homotetramer. The cofactor is Mg(2+).

The protein resides in the periplasm. The enzyme catalyses a phosphate monoester + H2O = an alcohol + phosphate. Activated by ethanol. Also activated by Co(2+), Zn(2+) and glycerol. Inhibited by EDTA, inorganic phosphate, nucleosides and Ca(2+). Unaffected by fluoride and tartrate. Functionally, dephosphorylates several organic phosphate monoesters including 5'-AMP, 3'-AMP, pNPP, PDP, 5'-UMP, 3'-UMP, G2P, glucose 6-P and ribose 5-P. No activity toward organic phosphate diesters. Also has a phosphotransferase activity catalyzing the transfer of low-energy phosphate groups from organic phosphate monoesters to free hydroxyl groups of various organic compounds. The protein is Class B acid phosphatase (aphA) of Morganella morganii (Proteus morganii).